We begin with the raw amino-acid sequence, 361 residues long: Phosphoserine aminotransferase (361 aa).

Arg-42 is a binding site for L-glutamate. Residues Ala-76–Thr-77, Trp-102, Thr-152, Asp-172, and Gln-195 each bind pyridoxal 5'-phosphate. Lys-196 bears the N6-(pyridoxal phosphate)lysine mark. Asn-237–Thr-238 contacts pyridoxal 5'-phosphate.

The protein belongs to the class-V pyridoxal-phosphate-dependent aminotransferase family. SerC subfamily. Homodimer. Pyridoxal 5'-phosphate is required as a cofactor.

Its subcellular location is the cytoplasm. The enzyme catalyses O-phospho-L-serine + 2-oxoglutarate = 3-phosphooxypyruvate + L-glutamate. It carries out the reaction 4-(phosphooxy)-L-threonine + 2-oxoglutarate = (R)-3-hydroxy-2-oxo-4-phosphooxybutanoate + L-glutamate. It functions in the pathway amino-acid biosynthesis; L-serine biosynthesis; L-serine from 3-phospho-D-glycerate: step 2/3. It participates in cofactor biosynthesis; pyridoxine 5'-phosphate biosynthesis; pyridoxine 5'-phosphate from D-erythrose 4-phosphate: step 3/5. Functionally, catalyzes the reversible conversion of 3-phosphohydroxypyruvate to phosphoserine and of 3-hydroxy-2-oxo-4-phosphonooxybutanoate to phosphohydroxythreonine. The chain is Phosphoserine aminotransferase from Xanthomonas axonopodis pv. citri (strain 306).